Reading from the N-terminus, the 66-residue chain is COP-associated protein (66 aa).

An HMA domain is found at 1–66 (MKIDIPVKGM…AILDAGYELG (66 aa)). Residues Cys12 and Cys15 each coordinate Cu cation.

Its function is as follows. Part of a cation-transporting system which is associated with copper export out of the H.pylori cells. This chain is COP-associated protein (copP), found in Helicobacter felis (strain ATCC 49179 / CCUG 28539 / NCTC 12436 / CS1).